Reading from the N-terminus, the 488-residue chain is MTRVLFATSEVFPLVKTGGLADVSASLPEALCRLGYDCQILLPGYPAALKAAREAGSRRKTRFRYGQYDVSLWQTRLPGTAVTLWLVDCPALFDRAGDSPYQNEEGEDWWDNAHRFHLFGRIGAMLALGQLGLAWRPDIVHCNDWQSALIPVFLADSQDAPKTVFTIHNLAYQGLFSHETFRALGLPDSLWRYEFLEFHGQLSFIKGGLVFSDAITTVSPSYADEIQTPWFGNGLDGLLRHKSSRLHGILNGIDTRQWNPEADPHLEFHYGADYPANKSQCQARLQQELGLEVCGAPLLGFVGRLVEQKGLDWLLGVIKPLLERGCQFALLGSGEHHYQESLKAMVREWPGQCSLTLGYNEGLAHRITAGADIFLMPSRFEPCGLNQMYSLRYGTVPVVHGVGGLNDTVFDPNEETPEQANGFVFREATPDALHAAITRALAAREDRKTWRKLQENGMKGDYSWKNRAGEYAALYRNLIAGNDRIHED.

Lysine 16 contacts ADP-alpha-D-glucose.

Belongs to the glycosyltransferase 1 family. Bacterial/plant glycogen synthase subfamily.

It catalyses the reaction [(1-&gt;4)-alpha-D-glucosyl](n) + ADP-alpha-D-glucose = [(1-&gt;4)-alpha-D-glucosyl](n+1) + ADP + H(+). It functions in the pathway glycan biosynthesis; glycogen biosynthesis. In terms of biological role, synthesizes alpha-1,4-glucan chains using ADP-glucose. The chain is Glycogen synthase from Marinobacter nauticus (strain ATCC 700491 / DSM 11845 / VT8) (Marinobacter aquaeolei).